The chain runs to 373 residues: Phospho-N-acetylmuramoyl-pentapeptide-transferase (373 aa).

The next 10 helical transmembrane spans lie at 28 to 48 (LLTVITSLAFSIILGPRTIAY), 72 to 92 (TPTMGGVLILTSIGFSTLCWA), 94 to 114 (LANPYVWILMVVMVIFGAVGW), 135 to 155 (YFWLSVGALFVGSSLYYIASQ), 177 to 197 (IVPLSALPLGLGFIIFTYFVI), 212 to 232 (GLAILPVVFVAAGLGVFSYVS), 252 to 272 (VTIVCAAMIGSGLGFLWYNAH), 276 to 296 (VFMGDVGALALGAMLGTIAVM), 301 to 321 (IAFAIMGGLFVAEALSVILQV), and 350 to 370 (QVVVRFWIIAILLVVLGLMTL).

The protein belongs to the glycosyltransferase 4 family. MraY subfamily. The cofactor is Mg(2+).

It is found in the cell inner membrane. The enzyme catalyses UDP-N-acetyl-alpha-D-muramoyl-L-alanyl-gamma-D-glutamyl-meso-2,6-diaminopimeloyl-D-alanyl-D-alanine + di-trans,octa-cis-undecaprenyl phosphate = di-trans,octa-cis-undecaprenyl diphospho-N-acetyl-alpha-D-muramoyl-L-alanyl-D-glutamyl-meso-2,6-diaminopimeloyl-D-alanyl-D-alanine + UMP. It functions in the pathway cell wall biogenesis; peptidoglycan biosynthesis. Its function is as follows. Catalyzes the initial step of the lipid cycle reactions in the biosynthesis of the cell wall peptidoglycan: transfers peptidoglycan precursor phospho-MurNAc-pentapeptide from UDP-MurNAc-pentapeptide onto the lipid carrier undecaprenyl phosphate, yielding undecaprenyl-pyrophosphoryl-MurNAc-pentapeptide, known as lipid I. The protein is Phospho-N-acetylmuramoyl-pentapeptide-transferase of Psychrobacter sp. (strain PRwf-1).